Here is a 192-residue protein sequence, read N- to C-terminus: Probable nicotinate-nucleotide adenylyltransferase (192 aa).

Belongs to the NadD family.

The enzyme catalyses nicotinate beta-D-ribonucleotide + ATP + H(+) = deamido-NAD(+) + diphosphate. The protein operates within cofactor biosynthesis; NAD(+) biosynthesis; deamido-NAD(+) from nicotinate D-ribonucleotide: step 1/1. Functionally, catalyzes the reversible adenylation of nicotinate mononucleotide (NaMN) to nicotinic acid adenine dinucleotide (NaAD). The chain is Probable nicotinate-nucleotide adenylyltransferase from Shouchella clausii (strain KSM-K16) (Alkalihalobacillus clausii).